The primary structure comprises 185 residues: Neuronal vesicle trafficking-associated protein 1 (185 aa).

At 1 to 82 (MVKLGNNFAE…ITEGVTERFK (82 aa)) the chain is on the cytoplasmic side. A helical; Signal-anchor for type II membrane protein transmembrane segment spans residues 83–103 (VSVLVLFALAFLTCVVFLVVY). Residues 104–185 (KVYKYDRACP…QETEAAEKSA (82 aa)) lie on the Lumenal side of the membrane. The segment at 129–164 (ESYYTEQDSSAREKFYTVINHYNLAKQSITRSVSPW) is required for GRIP1 interaction.

This sequence belongs to the NSG family. As to quaternary structure, forms a complex with GRIP1, GRIA2 and STX12; controls the intracellular fate of AMPAR and the endosomal sorting of the GRIA2 subunit toward recycling and membrane targeting. Interacts with GRIP1. Interacts with STX12. Interacts with APP; could regulate APP processing. Interacts with FAM171A1. Widely expressed in brain and spinal cord. Expressed in neurons during maturation and synapse formation.

It is found in the membrane. It localises to the golgi apparatus. Its subcellular location is the trans-Golgi network membrane. The protein localises to the endosome membrane. The protein resides in the cell projection. It is found in the dendrite. It localises to the early endosome membrane. Its subcellular location is the late endosome membrane. The protein localises to the lysosome lumen. The protein resides in the recycling endosome membrane. It is found in the cytoplasmic vesicle membrane. It localises to the golgi stack membrane. Its subcellular location is the endosome. The protein localises to the multivesicular body membrane. The protein resides in the endoplasmic reticulum membrane. Its function is as follows. Plays a role in the recycling mechanism in neurons of multiple receptors, including AMPAR, APP and L1CAM and acts at the level of early endosomes to promote sorting of receptors toward a recycling pathway. Regulates sorting and recycling of GRIA2 through interaction with GRIP1 and then contributes to the regulation of synaptic transmission and plasticity by affecting the recycling and targeting of AMPA receptors to the synapse. Is required for faithful sorting of L1CAM to axons by facilitating trafficking from somatodendritic early endosome or the recycling endosome. In an other hand, induces apoptosis via the activation of CASP3 in response to DNA damage. The sequence is that of Neuronal vesicle trafficking-associated protein 1 from Rattus norvegicus (Rat).